A 1202-amino-acid polypeptide reads, in one-letter code: Caskin-2 (1202 aa).

ANK repeat units lie at residues 48 to 77 (DGFS…TVDI), 81 to 110 (NGMR…AVNA), 114 to 143 (DGQI…NPCL), 147 to 176 (AKKT…CVAL), 188 to 217 (NYTT…EINR), and 220 to 249 (KTGT…DVNI). Tyrosine 253 is subject to Phosphotyrosine. The SH3 domain maps to 281–347 (SGILKVRALK…PPGIVEVVSK (67 aa)). Residues 355–460 (RLPSAPTPLR…GLHPPSLADN (106 aa)) form a disordered region. Serine 358, serine 393, serine 396, serine 403, serine 406, and serine 409 each carry phosphoserine. Polar residues predominate over residues 415–425 (SAGSGQSSEGT). At serine 471 the chain carries Phosphoserine. 2 consecutive SAM domains span residues 489–552 (KDAQ…LSIA) and 558–622 (YIPT…LAEL). Disordered regions lie at residues 676–1104 (LQAA…APKP) and 1116–1181 (GPKL…STKH). Position 725 is a phosphoserine (serine 725). Positions 731–740 (NLPEGTERPP) are enriched in basic and acidic residues. Residues 765–774 (SPAPGPPPGA) show a composition bias toward pro residues. 4 positions are modified to phosphoserine: serine 858, serine 877, serine 878, and serine 892. Residues 913–923 (PSEPPGPPAPA) are compositionally biased toward pro residues. The segment covering 940-949 (PPSRGSSGEG) has biased composition (low complexity). Composition is skewed to pro residues over residues 966 to 978 (PAGP…PVPP) and 1018 to 1030 (PAAP…PGES). The segment covering 1031–1051 (PPASSLPQPEPSSLPAQGVPT) has biased composition (low complexity). 2 stretches are compositionally biased toward pro residues: residues 1052–1068 (PLAP…PCPG) and 1124–1133 (GPRPVPPPRP). The segment covering 1135–1151 (STGTVGPGQAQQRLEQT) has biased composition (polar residues). Positions 1161 to 1172 (AAEKSIGTKEQE) are enriched in basic and acidic residues.

As to quaternary structure, may not bind CASK.

It is found in the cytoplasm. This is Caskin-2 (CASKIN2) from Homo sapiens (Human).